Consider the following 152-residue polypeptide: MVKRVQLVLTKDVSKLGRSGDLVDVAPGYARNYLIPQSLATHATPGILKQVERRREQERQRQLELRQQALEQKESLEKVGSLKIAKQVGENEAIFGTVTSQDVADAIQAATSQEVDRRGITIPDIGKLGTYKAEIKLFSDVTAQIDIEVVAS.

Belongs to the bacterial ribosomal protein bL9 family.

Its function is as follows. Binds to the 23S rRNA. In Nostoc sp. (strain PCC 7120 / SAG 25.82 / UTEX 2576), this protein is Large ribosomal subunit protein bL9.